Reading from the N-terminus, the 344-residue chain is Lipase chaperone (344 aa).

A helical transmembrane segment spans residues 14–34 (AAIYGVVGLAAIAGVAMWSGA).

It belongs to the lipase chaperone family.

Its subcellular location is the cell inner membrane. Its function is as follows. May be involved in the folding of the extracellular lipase during its passage through the periplasm. The protein is Lipase chaperone of Burkholderia cenocepacia (strain HI2424).